The primary structure comprises 93 residues: Putative ribosomal protein eL43-like (93 aa).

The C4-type zinc finger occupies 40-61 (CSFCGKTKMKRRAVKIRHCNSC).

Belongs to the eukaryotic ribosomal protein eL43 family.

This chain is Putative ribosomal protein eL43-like (RPL37AP8), found in Homo sapiens (Human).